The chain runs to 258 residues: MRRQRERKSMPDAVKKVYLIHGWGANRHMFDDLMPRLPATWPVSAVDLPGHGDAPFVRPFDIAAAADGIAAQIDAPADILGWSLGGLVALYLAARHPDKVRSLCLTASFARLTADEDYPEGLAAPALGKMVGAFRSDYAKHIKQFLQLQLLHTPDADGIIGRILPDLARCGTPQALQEALDAAERADARHLLDKIDVPVLLVFGGKDAITPPRMGEYLHRRLKGSRLVVMEKAAHAPFLSHAEAFAALYRDFVEGGLR.

Residues 17-241 (VYLIHGWGAN…KAAHAPFLSH (225 aa)) form the AB hydrolase-1 domain. Substrate-binding positions include Trp-23, 83-84 (SL), and 145-149 (FLQLQ). Catalysis depends on Ser-83, which acts as the Nucleophile. Active-site residues include Asp-207 and His-235. Position 235 (His-235) interacts with substrate.

It belongs to the AB hydrolase superfamily. Carboxylesterase BioH family. As to quaternary structure, monomer.

It is found in the cytoplasm. The catalysed reaction is 6-carboxyhexanoyl-[ACP] methyl ester + H2O = 6-carboxyhexanoyl-[ACP] + methanol + H(+). The protein operates within cofactor biosynthesis; biotin biosynthesis. The physiological role of BioH is to remove the methyl group introduced by BioC when the pimeloyl moiety is complete. It allows to synthesize pimeloyl-ACP via the fatty acid synthetic pathway through the hydrolysis of the ester bonds of pimeloyl-ACP esters. The sequence is that of Pimeloyl-[acyl-carrier protein] methyl ester esterase from Neisseria meningitidis serogroup B (strain ATCC BAA-335 / MC58).